Here is a 220-residue protein sequence, read N- to C-terminus: UPF0502 protein CV_4303 (220 aa).

This sequence belongs to the UPF0502 family.

The polypeptide is UPF0502 protein CV_4303 (Chromobacterium violaceum (strain ATCC 12472 / DSM 30191 / JCM 1249 / CCUG 213 / NBRC 12614 / NCIMB 9131 / NCTC 9757 / MK)).